A 73-amino-acid chain; its full sequence is Translation initiation factor IF-1 (73 aa).

The 72-residue stretch at 1 to 72 folds into the S1-like domain; that stretch reads MPKKDAIEVE…TRGRVTYRFK (72 aa).

This sequence belongs to the IF-1 family. Component of the 30S ribosomal translation pre-initiation complex which assembles on the 30S ribosome in the order IF-2 and IF-3, IF-1 and N-formylmethionyl-tRNA(fMet); mRNA recruitment can occur at any time during PIC assembly.

The protein resides in the cytoplasm. One of the essential components for the initiation of protein synthesis. Stabilizes the binding of IF-2 and IF-3 on the 30S subunit to which N-formylmethionyl-tRNA(fMet) subsequently binds. Helps modulate mRNA selection, yielding the 30S pre-initiation complex (PIC). Upon addition of the 50S ribosomal subunit IF-1, IF-2 and IF-3 are released leaving the mature 70S translation initiation complex. The chain is Translation initiation factor IF-1 from Dehalococcoides mccartyi (strain ATCC BAA-2266 / KCTC 15142 / 195) (Dehalococcoides ethenogenes (strain 195)).